Consider the following 139-residue polypeptide: ATP synthase epsilon chain (139 aa).

Belongs to the ATPase epsilon chain family. In terms of assembly, F-type ATPases have 2 components, CF(1) - the catalytic core - and CF(0) - the membrane proton channel. CF(1) has five subunits: alpha(3), beta(3), gamma(1), delta(1), epsilon(1). CF(0) has three main subunits: a, b and c.

Its subcellular location is the cell inner membrane. Produces ATP from ADP in the presence of a proton gradient across the membrane. This is ATP synthase epsilon chain from Marinomonas sp. (strain MWYL1).